A 412-amino-acid chain; its full sequence is Arginine biosynthesis bifunctional protein ArgJ (412 aa).

Residues threonine 162, lysine 188, threonine 199, glutamate 285, asparagine 407, and threonine 412 each coordinate substrate. Residue threonine 199 is the Nucleophile of the active site.

Belongs to the ArgJ family. Heterotetramer of two alpha and two beta chains.

Its subcellular location is the cytoplasm. It catalyses the reaction N(2)-acetyl-L-ornithine + L-glutamate = N-acetyl-L-glutamate + L-ornithine. It carries out the reaction L-glutamate + acetyl-CoA = N-acetyl-L-glutamate + CoA + H(+). Its pathway is amino-acid biosynthesis; L-arginine biosynthesis; L-ornithine and N-acetyl-L-glutamate from L-glutamate and N(2)-acetyl-L-ornithine (cyclic): step 1/1. It functions in the pathway amino-acid biosynthesis; L-arginine biosynthesis; N(2)-acetyl-L-ornithine from L-glutamate: step 1/4. Catalyzes two activities which are involved in the cyclic version of arginine biosynthesis: the synthesis of N-acetylglutamate from glutamate and acetyl-CoA as the acetyl donor, and of ornithine by transacetylation between N(2)-acetylornithine and glutamate. The chain is Arginine biosynthesis bifunctional protein ArgJ from Staphylococcus saprophyticus subsp. saprophyticus (strain ATCC 15305 / DSM 20229 / NCIMB 8711 / NCTC 7292 / S-41).